Consider the following 341-residue polypeptide: S-adenosylmethionine:tRNA ribosyltransferase-isomerase (341 aa).

Belongs to the QueA family. As to quaternary structure, monomer.

It localises to the cytoplasm. The catalysed reaction is 7-aminomethyl-7-carbaguanosine(34) in tRNA + S-adenosyl-L-methionine = epoxyqueuosine(34) in tRNA + adenine + L-methionine + 2 H(+). It participates in tRNA modification; tRNA-queuosine biosynthesis. Transfers and isomerizes the ribose moiety from AdoMet to the 7-aminomethyl group of 7-deazaguanine (preQ1-tRNA) to give epoxyqueuosine (oQ-tRNA). The sequence is that of S-adenosylmethionine:tRNA ribosyltransferase-isomerase from Clostridium kluyveri (strain NBRC 12016).